The following is a 480-amino-acid chain: RuvB-like helicase 2 (480 aa).

Position 76 to 83 (76 to 83 (GPPSTGKT)) interacts with ATP.

It belongs to the RuvB family. May form heterododecamers with RVB1. Component of the SWR1 chromatin remodeling complex, the INO80 chromatin remodeling complex, and of the R2TP complex.

The protein resides in the nucleus. The enzyme catalyses ATP + H2O = ADP + phosphate + H(+). Functionally, DNA helicase which participates in several chromatin remodeling complexes, including the SWR1 and the INO80 complexes. The SWR1 complex mediates the ATP-dependent exchange of histone H2A for the H2A variant HZT1 leading to transcriptional regulation of selected genes by chromatin remodeling. The INO80 complex remodels chromatin by shifting nucleosomes and is involved in DNA repair. Also involved in pre-rRNA processing. The sequence is that of RuvB-like helicase 2 (RVB2) from Debaryomyces hansenii (strain ATCC 36239 / CBS 767 / BCRC 21394 / JCM 1990 / NBRC 0083 / IGC 2968) (Yeast).